Here is a 359-residue protein sequence, read N- to C-terminus: Alanine racemase (359 aa).

Lys34 functions as the Proton acceptor; specific for D-alanine in the catalytic mechanism. The residue at position 34 (Lys34) is an N6-(pyridoxal phosphate)lysine. Position 129 (Arg129) interacts with substrate. The active-site Proton acceptor; specific for L-alanine is Tyr255. Residue Met303 participates in substrate binding.

Belongs to the alanine racemase family. Pyridoxal 5'-phosphate is required as a cofactor.

It catalyses the reaction L-alanine = D-alanine. It participates in amino-acid biosynthesis; D-alanine biosynthesis; D-alanine from L-alanine: step 1/1. Its function is as follows. Catalyzes the interconversion of L-alanine and D-alanine. May also act on other amino acids. The chain is Alanine racemase (alr) from Shigella dysenteriae serotype 1 (strain Sd197).